The following is a 1009-amino-acid chain: Regulator of telomere elongation helicase 1 homolog (1009 aa).

Residues 7-322 form the Helicase ATP-binding domain; it reads AGIPVHFPFE…KEMLLELEKA (316 aa). Position 42 to 49 (42 to 49) interacts with ATP; the sequence is SPTGTGKT. Positions 146, 164, 173, and 209 each coordinate [4Fe-4S] cluster. The short motif at 252–255 is the DEAH box element; it reads DEAH.

It belongs to the helicase family. RAD3/XPD subfamily.

The protein resides in the nucleus. It catalyses the reaction ATP + H2O = ADP + phosphate + H(+). In terms of biological role, a probable ATP-dependent DNA helicase implicated in DNA repair and the maintenance of genomic stability. Acts as an anti-recombinase to counteract toxic recombination and limit crossover during meiosis. Regulates meiotic recombination and crossover homeostasis by physically dissociating strand invasion events and thereby promotes noncrossover repair by meiotic synthesis dependent strand annealing (SDSA) as well as disassembly of D loop recombination intermediates. The chain is Regulator of telomere elongation helicase 1 homolog from Drosophila persimilis (Fruit fly).